Here is a 419-residue protein sequence, read N- to C-terminus: 3-phosphoshikimate 1-carboxyvinyltransferase (419 aa).

3-phosphoshikimate-binding residues include Lys-21, Ser-22, and Arg-26. Lys-21 is a binding site for phosphoenolpyruvate. Phosphoenolpyruvate-binding residues include Gly-91 and Arg-119. Positions 164, 165, 166, 191, 305, and 332 each coordinate 3-phosphoshikimate. A phosphoenolpyruvate-binding site is contributed by Gln-166. The Proton acceptor role is filled by Asp-305. 2 residues coordinate phosphoenolpyruvate: Arg-336 and Arg-376.

The protein belongs to the EPSP synthase family. As to quaternary structure, monomer.

Its subcellular location is the cytoplasm. It carries out the reaction 3-phosphoshikimate + phosphoenolpyruvate = 5-O-(1-carboxyvinyl)-3-phosphoshikimate + phosphate. It participates in metabolic intermediate biosynthesis; chorismate biosynthesis. Functionally, catalyzes the transfer of the enolpyruvyl moiety of phosphoenolpyruvate (PEP) to the 5-hydroxyl of shikimate-3-phosphate (S3P) to produce enolpyruvyl shikimate-3-phosphate and inorganic phosphate. In Methanothermobacter thermautotrophicus (strain ATCC 29096 / DSM 1053 / JCM 10044 / NBRC 100330 / Delta H) (Methanobacterium thermoautotrophicum), this protein is 3-phosphoshikimate 1-carboxyvinyltransferase.